We begin with the raw amino-acid sequence, 149 residues long: Calmodulin (149 aa).

Ala-2 is modified (N-acetylalanine). 4 EF-hand domains span residues 8-43, 44-79, 81-116, and 117-149; these read EQIA…LGQN, PTEA…KMKD, DTEE…LGEK, and LTDE…MMAK. 14 residues coordinate Ca(2+): Asp-21, Asp-23, Asp-25, Thr-27, Glu-32, Asp-57, Asp-59, Asn-61, Thr-63, Glu-68, Asp-94, Asp-96, Asn-98, and Glu-105. An N6,N6,N6-trimethyllysine modification is found at Lys-116. The Ca(2+) site is built by Asp-130, Asp-132, Asp-134, Gln-136, and Glu-141.

The protein belongs to the calmodulin family.

In terms of biological role, calmodulin mediates the control of a large number of enzymes, ion channels and other proteins by Ca(2+). Among the enzymes to be stimulated by the calmodulin-Ca(2+) complex are a number of protein kinases and phosphatases. The chain is Calmodulin from Karlodinium veneficum (Dinoflagellate).